The sequence spans 1149 residues: Structural maintenance of chromosomes protein 6 homolog smc-6 (1149 aa).

G77–S84 is an ATP binding site. Residues L309–D460 are a coiled coil. The flexible hinge stretch occupies residues I461 to L687. A coiled-coil region spans residues Y714–D920. 2 disordered regions span residues N875–E900 and E1026–L1060. Acidic residues predominate over residues E1026–D1038. Residues P1042–R1058 are compositionally biased toward basic residues.

This sequence belongs to the SMC family. SMC6 subfamily. In terms of assembly, interacts with smc-5. As to expression, expressed in the germline (at protein level).

Its subcellular location is the nucleus. The protein resides in the chromosome. Its function is as follows. Core component of the smc-5/smc-6 complex. Involved in DNA double-strand break repair by promoting sister-chromatid homologous recombination during meiosis. Also plays a role in the DNA damage repair of ultraviolet (UV) radiation-induced DNA lesions. Promotes efficient DNA replication. The chain is Structural maintenance of chromosomes protein 6 homolog smc-6 from Caenorhabditis elegans.